Here is a 281-residue protein sequence, read N- to C-terminus: 4-deoxy-L-threo-5-hexosulose-uronate ketol-isomerase (281 aa).

Residues histidine 198, histidine 200, glutamate 205, and histidine 248 each contribute to the Zn(2+) site.

This sequence belongs to the KduI family. It depends on Zn(2+) as a cofactor.

The enzyme catalyses 5-dehydro-4-deoxy-D-glucuronate = 3-deoxy-D-glycero-2,5-hexodiulosonate. Its pathway is glycan metabolism; pectin degradation; 2-dehydro-3-deoxy-D-gluconate from pectin: step 4/5. Functionally, catalyzes the isomerization of 5-dehydro-4-deoxy-D-glucuronate to 3-deoxy-D-glycero-2,5-hexodiulosonate. This chain is 4-deoxy-L-threo-5-hexosulose-uronate ketol-isomerase, found in Lacticaseibacillus paracasei (strain ATCC 334 / BCRC 17002 / CCUG 31169 / CIP 107868 / KCTC 3260 / NRRL B-441) (Lactobacillus paracasei).